Reading from the N-terminus, the 528-residue chain is Glucose-6-phosphate isomerase (528 aa).

Catalysis depends on Glu-322, which acts as the Proton donor. Catalysis depends on residues His-351 and Lys-455.

This sequence belongs to the GPI family.

Its subcellular location is the cytoplasm. It carries out the reaction alpha-D-glucose 6-phosphate = beta-D-fructose 6-phosphate. It functions in the pathway carbohydrate biosynthesis; gluconeogenesis. It participates in carbohydrate degradation; glycolysis; D-glyceraldehyde 3-phosphate and glycerone phosphate from D-glucose: step 2/4. Functionally, catalyzes the reversible isomerization of glucose-6-phosphate to fructose-6-phosphate. The protein is Glucose-6-phosphate isomerase of Nostoc sp. (strain PCC 7120 / SAG 25.82 / UTEX 2576).